A 284-amino-acid polypeptide reads, in one-letter code: Cell wall mannoprotein 1 (284 aa).

An N-terminal signal peptide occupies residues methionine 1–alanine 17. The segment covering serine 176–threonine 234 has biased composition (low complexity). The interval serine 176–threonine 252 is disordered.

This sequence belongs to the cell wall mannoprotein 1 family. Galactomannoprotein, glycosylated.

It is found in the secreted. The protein resides in the cell wall. Constitutive protein of the cell wall. Antigen target of host humoral immune response. The protein is Cell wall mannoprotein 1 of Aspergillus fumigatus (Neosartorya fumigata).